Consider the following 420-residue polypeptide: uncharacterized protein (420 aa).

Belongs to the mimivirus R160 family.

The protein resides in the virion. This is an uncharacterized protein from Acanthamoeba polyphaga mimivirus (APMV).